An 89-amino-acid polypeptide reads, in one-letter code: Small ribosomal subunit protein bS20 (89 aa).

It belongs to the bacterial ribosomal protein bS20 family.

Its function is as follows. Binds directly to 16S ribosomal RNA. The chain is Small ribosomal subunit protein bS20 from Helicobacter pylori (strain P12).